The chain runs to 429 residues: C4-dicarboxylate transport protein (429 aa).

Transmembrane regions (helical) follow at residues 9–29 (VLYVQVIFAIVVGVILGHYYP), 45–65 (LIKMVIGPIIFCTVVTGIAGM), 79–99 (LLYFEIVSTFALVLGLAATHI), 149–169 (GEILQILLIALLFGSVLAHLG), 185–205 (VLFGIVHIVTKLAPIGAFGAM), 223–243 (LIGTFYLTSVVFVLVVLGAIA), 308–328 (IYMTMAVLFIAQATNIELTWM), and 356–376 (AATLAVVPTIPLSGMVLILGI).

Belongs to the dicarboxylate/amino acid:cation symporter (DAACS) (TC 2.A.23) family.

It localises to the cell inner membrane. In terms of biological role, responsible for the transport of dicarboxylates such as succinate, fumarate, and malate from the periplasm across the membrane. The sequence is that of C4-dicarboxylate transport protein from Burkholderia multivorans (strain ATCC 17616 / 249).